The following is a 376-amino-acid chain: MTQRFSFTRLGQDGAARLGRINTPRGEIRTPAFMPVGTAATVKAMRPESVRETGADILLGNTYHLMLRPTAERIARLGGLHRFMNWDRPILTDSGGFQVMSLTGLRKLTEQGVTFKSHIDGSKHMLSPERSMEIQKLLRSDIVMCFDECPALPAPRERITESMELSMRWAARSREAFGDWPGHALFGIQQGGLEEDLRGKSAEALRAIEFDGYAVGGLAVGEGQEAMFGVLDYAPGMLPEDKPRYLMGVGKPGDLVGAVKRGIDMFDCVLPSRSGRTGQVFTRRGVVNIKNARHADDPRPLDEDCTCPACRSYSRAYLHHVFRAGEILSSMLLTWHNLHYYQELMQGMRDAIGAGDFAGFEARFLAQQAEGDIAPV.

Catalysis depends on aspartate 93, which acts as the Proton acceptor. Substrate-binding positions include 93 to 97 (DSGGF), aspartate 147, glutamine 190, and glycine 217. Positions 248-254 (GVGKPGD) are RNA binding. Aspartate 267 functions as the Nucleophile in the catalytic mechanism. The Zn(2+) site is built by cysteine 305, cysteine 307, cysteine 310, and histidine 336.

It belongs to the queuine tRNA-ribosyltransferase family. Homodimer. Within each dimer, one monomer is responsible for RNA recognition and catalysis, while the other monomer binds to the replacement base PreQ1. Requires Zn(2+) as cofactor.

The catalysed reaction is 7-aminomethyl-7-carbaguanine + guanosine(34) in tRNA = 7-aminomethyl-7-carbaguanosine(34) in tRNA + guanine. It participates in tRNA modification; tRNA-queuosine biosynthesis. Functionally, catalyzes the base-exchange of a guanine (G) residue with the queuine precursor 7-aminomethyl-7-deazaguanine (PreQ1) at position 34 (anticodon wobble position) in tRNAs with GU(N) anticodons (tRNA-Asp, -Asn, -His and -Tyr). Catalysis occurs through a double-displacement mechanism. The nucleophile active site attacks the C1' of nucleotide 34 to detach the guanine base from the RNA, forming a covalent enzyme-RNA intermediate. The proton acceptor active site deprotonates the incoming PreQ1, allowing a nucleophilic attack on the C1' of the ribose to form the product. After dissociation, two additional enzymatic reactions on the tRNA convert PreQ1 to queuine (Q), resulting in the hypermodified nucleoside queuosine (7-(((4,5-cis-dihydroxy-2-cyclopenten-1-yl)amino)methyl)-7-deazaguanosine). In Dinoroseobacter shibae (strain DSM 16493 / NCIMB 14021 / DFL 12), this protein is Queuine tRNA-ribosyltransferase.